Reading from the N-terminus, the 98-residue chain is Integration host factor subunit alpha (98 aa).

The segment at 49-72 (FGNFDLRDKNQRPGRNPKTGEDIP) is disordered.

Belongs to the bacterial histone-like protein family. In terms of assembly, heterodimer of an alpha and a beta chain.

Its function is as follows. This protein is one of the two subunits of integration host factor, a specific DNA-binding protein that functions in genetic recombination as well as in transcriptional and translational control. The protein is Integration host factor subunit alpha of Shewanella loihica (strain ATCC BAA-1088 / PV-4).